The primary structure comprises 128 residues: uncharacterized protein (128 aa).

Transmembrane regions (helical) follow at residues 19–41, 54–71, and 75–97; these read MAIV…YVGS, LTFL…SIMQ, and PLIA…VDNL.

The protein resides in the cell membrane. This is an uncharacterized protein from Pasteurella multocida (strain Pm70).